The sequence spans 91 residues: uncharacterized protein (91 aa).

Residues 71 to 91 form a disordered region; that stretch reads EANDRPSKKCGSGNLRVEKLV.

This is an uncharacterized protein from Archaeoglobus fulgidus (strain ATCC 49558 / DSM 4304 / JCM 9628 / NBRC 100126 / VC-16).